A 260-amino-acid polypeptide reads, in one-letter code: Thiazole synthase (260 aa).

K96 acts as the Schiff-base intermediate with DXP in catalysis. 1-deoxy-D-xylulose 5-phosphate-binding positions include G157, 184 to 185, and 206 to 207; these read AG and NT.

This sequence belongs to the ThiG family. In terms of assembly, homotetramer. Forms heterodimers with either ThiH or ThiS.

The protein resides in the cytoplasm. The enzyme catalyses [ThiS sulfur-carrier protein]-C-terminal-Gly-aminoethanethioate + 2-iminoacetate + 1-deoxy-D-xylulose 5-phosphate = [ThiS sulfur-carrier protein]-C-terminal Gly-Gly + 2-[(2R,5Z)-2-carboxy-4-methylthiazol-5(2H)-ylidene]ethyl phosphate + 2 H2O + H(+). It participates in cofactor biosynthesis; thiamine diphosphate biosynthesis. Its function is as follows. Catalyzes the rearrangement of 1-deoxy-D-xylulose 5-phosphate (DXP) to produce the thiazole phosphate moiety of thiamine. Sulfur is provided by the thiocarboxylate moiety of the carrier protein ThiS. In vitro, sulfur can be provided by H(2)S. This Bradyrhizobium diazoefficiens (strain JCM 10833 / BCRC 13528 / IAM 13628 / NBRC 14792 / USDA 110) protein is Thiazole synthase.